The following is a 411-amino-acid chain: CinA-like protein (411 aa).

This sequence belongs to the CinA family.

This is CinA-like protein from Dictyoglomus thermophilum (strain ATCC 35947 / DSM 3960 / H-6-12).